We begin with the raw amino-acid sequence, 381 residues long: Chymosin (381 aa).

An N-terminal signal peptide occupies residues 1–16 (MRCLVVLLAVFALSQG). Positions 17 to 58 (AEITRIPLYKGKSLRKALKEHGLLEDFLQKQQYGISSKYSGF) are cleaved as a propeptide — activation peptide. The Peptidase A1 domain occupies 74 to 378 (YFGKIYLGTP…DRANNLVGLA (305 aa)). Asp-92 is an active-site residue. Disulfide bonds link Cys-105–Cys-110 and Cys-265–Cys-269. Asp-274 is a catalytic residue. Cysteines 308 and 341 form a disulfide.

Belongs to the peptidase A1 family. Monomer.

The enzyme catalyses Broad specificity similar to that of pepsin A. Clots milk by cleavage of a single 104-Ser-Phe-|-Met-Ala-107 bond in kappa-chain of casein.. Its function is as follows. Chymosin is synthesized in the mucosa of the abomasum (fourth stomach) of young (unweaned) ruminants. The enzyme hydrolyzes casein to paracasein. This chain is Chymosin (CYM), found in Bos taurus (Bovine).